A 266-amino-acid chain; its full sequence is MICOS complex subunit MIC27 (266 aa).

A mitochondrion-targeting transit peptide spans 1 to 27; that stretch reads MAAIRMGKLTTMPAGLIYASVSVHAAK. Residues 28-110 lie on the Mitochondrial intermembrane side of the membrane; the sequence is EEESKKQLVK…YVYMKNPPRD (83 aa). A helical transmembrane segment spans residues 111-129; the sequence is FLPKMGVITVSGLAGLVSA. Topologically, residues 130 to 137 are mitochondrial matrix; sequence RKGSKFKK. Residues 138-155 traverse the membrane as a helical segment; the sequence is ITYPLGLATLGATVCYPV. Residues 156-266 are Mitochondrial intermembrane-facing; sequence QSVIIAKVTA…NVTNSGVLRI (111 aa). Phosphoserine is present on S204.

It belongs to the apolipoprotein O/MICOS complex subunit Mic27 family. In terms of assembly, component of the mitochondrial contact site and cristae organizing system (MICOS) complex, composed of at least MICOS10/MIC10, CHCHD3/MIC19, CHCHD6/MIC25, APOOL/MIC27, IMMT/MIC60, APOO/MIC23/MIC26 and MICOS13/MIC13. This complex was also known under the names MINOS or MitOS complex. The MICOS complex associates with mitochondrial outer membrane proteins SAMM50, MTX1 and MTX2 (together described as components of the mitochondrial outer membrane sorting assembly machinery (SAM) complex) and DNAJC11, mitochondrial inner membrane protein TMEM11 and with HSPA9. The MICOS and SAM complexes together with DNAJC11 are part of a large protein complex spanning both membranes termed the mitochondrial intermembrane space bridging (MIB) complex. Interacts with MICOS10/MIC10, IMMT/MIC60 and APOO/MIC23/MIC26.

It is found in the mitochondrion inner membrane. The protein localises to the mitochondrion. In terms of biological role, component of the MICOS complex, a large protein complex of the mitochondrial inner membrane that plays crucial roles in the maintenance of crista junctions, inner membrane architecture, and formation of contact sites to the outer membrane. Specifically binds to cardiolipin (in vitro) but not to the precursor lipid phosphatidylglycerol. Plays a crucial role in crista junction formation and mitochondrial function. This Pongo abelii (Sumatran orangutan) protein is MICOS complex subunit MIC27 (APOOL).